Reading from the N-terminus, the 694-residue chain is DNA polymerase eta (694 aa).

A UmuC domain is found at 9-258 (VALVDMDCFF…MPIRKIRSLG (250 aa)). 2 residues coordinate Mg(2+): aspartate 13 and methionine 14. The Mn(2+) site is built by aspartate 13 and methionine 14. Arginine 61 contacts a 2'-deoxyribonucleoside 5'-triphosphate. Mg(2+)-binding residues include aspartate 115 and glutamate 116. Mn(2+) contacts are provided by aspartate 115 and glutamate 116. The active site involves glutamate 116. The disordered stretch occupies residues 565 to 598 (DSGPDDGAVKPVSSKAVSTEMNVAGDSPNVLDSP). Residues 609–643 (ATEDQVLCEKCDSLVPVWDMPEHTDYHFALELQKS) form a UBZ3-type zinc finger. 4 residues coordinate Zn(2+): cysteine 616, cysteine 619, histidine 631, and histidine 635. The tract at residues 651–694 (KPQAIPAVSPQGKRNPKSPSASSSKRLRPHGMQTLESFFKPLTH) is disordered. Residues lysine 663, lysine 667, and lysine 675 each participate in a glycyl lysine isopeptide (Lys-Gly) (interchain with G-Cter in ubiquitin) cross-link. Positions 682–689 (MQTLESFF) match the PIP-box motif. Residue lysine 690 forms a Glycyl lysine isopeptide (Lys-Gly) (interchain with G-Cter in ubiquitin) linkage.

The protein belongs to the DNA polymerase type-Y family. As to quaternary structure, interacts with REV1. Interacts with monoubiquitinated PCNA, but not unmodified PCNA. Interacts with POLI; this interaction targets POLI to the replication machinery. Interacts with PALB2 and BRCA2; the interactions are direct and are required to sustain the recruitment of POLH at blocked replication forks and to stimulate POLH-dependent DNA synthesis on D loop substrates. Interacts (via C-terminus) with TRAIP. Interacts with ubiquitin. Interacts with POLDIP2. Mg(2+) is required as a cofactor. Requires Mn(2+) as cofactor. Monoubiquitinated by RCHY1/PIRH2. Ubiquitination depends on integrity of the UBZ3-type zinc finger domain and is enhanced by TRAIP. Ubiquitination inhibits the ability of PolH to interact with PCNA and to bypass UV-induced lesions. In terms of tissue distribution, ubiquitous.

The protein localises to the nucleus. It catalyses the reaction DNA(n) + a 2'-deoxyribonucleoside 5'-triphosphate = DNA(n+1) + diphosphate. With respect to regulation, the enzyme in complex with the DNA substrate binds a third divalent metal cation. The binding of this third divalent cation, which is coordinated by water molecules and two oxygen atoms from DNA and dNTP, is essential for catalyzing the DNA synthesis. DNA polymerase specifically involved in the DNA repair by translesion synthesis (TLS). Due to low processivity on both damaged and normal DNA, cooperates with the heterotetrameric (REV3L, REV7, POLD2 and POLD3) POLZ complex for complete bypass of DNA lesions. Inserts one or 2 nucleotide(s) opposite the lesion, the primer is further extended by the tetrameric POLZ complex. In the case of 1,2-intrastrand d(GpG)-cisplatin cross-link, inserts dCTP opposite the 3' guanine. Particularly important for the repair of UV-induced pyrimidine dimers. Although inserts the correct base, may cause base transitions and transversions depending upon the context. May play a role in hypermutation at immunoglobulin genes. Forms a Schiff base with 5'-deoxyribose phosphate at abasic sites, but does not have any lyase activity, preventing the release of the 5'-deoxyribose phosphate (5'-dRP) residue. This covalent trapping of the enzyme by the 5'-dRP residue inhibits its DNA synthetic activity during base excision repair, thereby avoiding high incidence of mutagenesis. Targets POLI to replication foci. The sequence is that of DNA polymerase eta (Polh) from Mus musculus (Mouse).